The sequence spans 132 residues: Small ribosomal subunit protein uS11 (132 aa).

Belongs to the universal ribosomal protein uS11 family. In terms of assembly, part of the 30S ribosomal subunit.

Functionally, located on the platform of the 30S subunit. The polypeptide is Small ribosomal subunit protein uS11 (Thermoplasma volcanium (strain ATCC 51530 / DSM 4299 / JCM 9571 / NBRC 15438 / GSS1)).